Consider the following 274-residue polypeptide: Copper chaperone for superoxide dismutase (274 aa).

The HMA domain occupies 11–74; it reads MCALEFTVQM…LLESTGRQAV (64 aa). Cys22 and Cys25 together coordinate Cu cation. Lys76 participates in a covalent cross-link: Glycyl lysine isopeptide (Lys-Gly) (interchain with G-Cter in ubiquitin). Positions 88–234 are superoxide dismutase-like; that stretch reads AAVAIMEGSG…LACGIIARSA (147 aa). A disulfide bridge connects residues Cys141 and Cys227. Residues His147, His155, His164, and Asp167 each contribute to the Zn(2+) site. Residues Lys189, Lys216, and Lys241 each participate in a glycyl lysine isopeptide (Lys-Gly) (interchain with G-Cter in ubiquitin) cross-link. The Cu cation site is built by Cys244 and Cys246. Ser267 carries the post-translational modification Phosphoserine.

The protein in the C-terminal section; belongs to the Cu-Zn superoxide dismutase family. In terms of assembly, homodimer, and heterodimer with SOD1. Interacts with COMMD1. Interacts with XIAP/BIRC4. Interacts with SLC31A1(via C-terminal domain); this interaction is Cu(1+)-mediated. The heterodimer CCS:SOD1 interacts with SLC31A1; this heterotrimer is Cu(1+)-mediated and its maintenance is regulated through SOD1 activation. The cofactor is Cu(2+). Zn(2+) serves as cofactor. Ubiquitinion by XIAP/BIRC4 leads to enhancement of its chaperone activity toward its physiologic target, SOD1, rather than proteasomal degradation. XIAP/BIRC4 preferentially ubiquitinates at Lys-241.

It is found in the cytoplasm. Its function is as follows. Delivers copper to copper zinc superoxide dismutase (SOD1). The protein is Copper chaperone for superoxide dismutase of Rattus norvegicus (Rat).